The chain runs to 392 residues: p21-activated protein kinase-interacting protein 1 (392 aa).

5 WD repeats span residues 40–77 (AHTA…DHGA), 80–118 (HHNG…CLKS), 121–160 (AHKG…SAFI), 202–240 (TNER…CLSE), and 243–284 (AHEN…KVSP). The tract at residues 309-392 (TKESPPAAAE…RKKKKIRMMQ (84 aa)) is disordered. The span at 325–351 (EQSRRNKEESGHAVQEEEKQPKPDTEK) shows a compositional bias: basic and acidic residues. Residues 355–368 (TGDSNKPTRGNSLV) show a composition bias toward polar residues. A compositionally biased stretch (basic residues) spans 381 to 392 (KKRKKKKIRMMQ).

In terms of assembly, interacts with PAK1.

Its subcellular location is the nucleus. The protein localises to the nucleolus. Negatively regulates the PAK1 kinase. PAK1 is a member of the PAK kinase family, which has been shown to play a positive role in the regulation of signaling pathways involving MAPK8 and RELA. PAK1 exists as an inactive homodimer, which is activated by binding of small GTPases such as CDC42 to an N-terminal regulatory domain. PAK1IP1 also binds to the N-terminus of PAK1, and inhibits the specific activation of PAK1 by CDC42. May be involved in ribosomal large subunit assembly. The protein is p21-activated protein kinase-interacting protein 1 (PAK1IP1) of Bos taurus (Bovine).